A 420-amino-acid chain; its full sequence is Histidine--tRNA ligase (420 aa).

The protein belongs to the class-II aminoacyl-tRNA synthetase family. In terms of assembly, homodimer.

The protein localises to the cytoplasm. It catalyses the reaction tRNA(His) + L-histidine + ATP = L-histidyl-tRNA(His) + AMP + diphosphate + H(+). The polypeptide is Histidine--tRNA ligase (Thermotoga sp. (strain RQ2)).